The following is a 234-amino-acid chain: Carboxymethylenebutenolidase 1 (234 aa).

Residues cysteine 123, aspartate 171, and histidine 201 contribute to the active site.

The protein belongs to the dienelactone hydrolase family. Monomer.

It carries out the reaction 2-(5-oxo-2,5-dihydrofuran-2-ylidene)acetate + H2O = 4-oxohex-2-enedioate + H(+). It functions in the pathway aromatic compound metabolism; 3-chlorocatechol degradation. Ring cleavage of cyclic ester dienelactone to produce maleylacetate. The protein is Carboxymethylenebutenolidase 1 (tfdEI) of Cupriavidus pinatubonensis (strain JMP 134 / LMG 1197) (Cupriavidus necator (strain JMP 134)).